The sequence spans 750 residues: Photosystem I P700 chlorophyll a apoprotein A1 (750 aa).

Transmembrane regions (helical) follow at residues Val70–Ala93, Leu156–His179, Leu195–Leu219, Ile291–Tyr309, Trp346–Tyr369, Leu385–Val411, Ala433–His455, and Phe531–Leu549. The [4Fe-4S] cluster site is built by Cys573 and Cys582. The next 2 helical transmembrane spans lie at His589–Trp610 and Leu664–Phe686. His675 lines the chlorophyll a' pocket. Positions 683 and 691 each coordinate chlorophyll a. Trp692 is a phylloquinone binding site. A helical membrane pass occupies residues Ala724–Ala744.

Belongs to the PsaA/PsaB family. As to quaternary structure, the PsaA/B heterodimer binds the P700 chlorophyll special pair and subsequent electron acceptors. PSI consists of a core antenna complex that captures photons, and an electron transfer chain that converts photonic excitation into a charge separation. The eukaryotic PSI reaction center is composed of at least 11 subunits. It depends on P700 is a chlorophyll a/chlorophyll a' dimer, A0 is one or more chlorophyll a, A1 is one or both phylloquinones and FX is a shared 4Fe-4S iron-sulfur center. as a cofactor.

It localises to the plastid. Its subcellular location is the chloroplast thylakoid membrane. The catalysed reaction is reduced [plastocyanin] + hnu + oxidized [2Fe-2S]-[ferredoxin] = oxidized [plastocyanin] + reduced [2Fe-2S]-[ferredoxin]. PsaA and PsaB bind P700, the primary electron donor of photosystem I (PSI), as well as the electron acceptors A0, A1 and FX. PSI is a plastocyanin-ferredoxin oxidoreductase, converting photonic excitation into a charge separation, which transfers an electron from the donor P700 chlorophyll pair to the spectroscopically characterized acceptors A0, A1, FX, FA and FB in turn. Oxidized P700 is reduced on the lumenal side of the thylakoid membrane by plastocyanin. The polypeptide is Photosystem I P700 chlorophyll a apoprotein A1 (Saccharum hybrid (Sugarcane)).